The following is a 281-amino-acid chain: 3'-5' exonuclease Snipper (281 aa).

Residues 19 to 52 form a disordered region; it reads DGARPDPNNDPEESFNEDEVTEANSVPAKSKKSR. Over residues 27–39 the composition is skewed to acidic residues; it reads NDPEESFNEDEVT. An Exonuclease domain is found at 64–262; it reads YVIAVDFEAT…MCKMVRDGAL (199 aa). Mg(2+) contacts are provided by Asp69 and Glu71. The active-site Proton acceptor is Glu71. The AMP site is built by Glu71 and Ala72. Residue Asp183 coordinates Mg(2+). The Proton acceptor role is filled by His240. His240 contributes to the AMP binding site. A Mg(2+)-binding site is contributed by Asp245.

The protein belongs to the ERI2 family. The cofactor is Mg(2+).

The protein localises to the cytoplasm. Its subcellular location is the nucleus. It is found in the nucleolus. Its function is as follows. A broad-specificity exonuclease, capable of degrading both structure-specific DNA and RNA targets without sequence specificity in vitro. Requires two to five unpaired nucleotides in the 3' region for efficient binding and nuclease activity. Binds with higher affinity to RNA and DNA stem-loop substrates compared to single-stranded substrate. Binds to the 3'-end of histone mRNAs and degrades them, suggesting that it might play a role in histone mRNA decay after replication. Can readily cleave the histone stem-loop RNA beyond the -12 (UUU) position in the loop to produce -14 and then -16 oligonucleotide fragments for both the stem-loop and the reverse stem-loop. Cleaves both the single-stranded 3' flank as well as the double-stranded stem portion of histone stem-loop RNA. Might affect histone mRNA 3' processing thereby regulating histone protein expression. Has an important role in development and tissue formation. Might have a role in 5.8S rRNA precursor processing. The chain is 3'-5' exonuclease Snipper from Drosophila melanogaster (Fruit fly).